The sequence spans 411 residues: ATP-dependent Clp protease ATP-binding subunit ClpX (411 aa).

The ClpX-type ZB domain occupies 1–49; that stretch reads MSDKNIRCSFCGRTQKEVKKLIAGPGVYICDECVKLAYDIIEEEDSEEI. Residues Cys-8, Cys-11, Cys-30, and Cys-33 each coordinate Zn(2+). 115-122 is a binding site for ATP; the sequence is PTGVGKTL.

Belongs to the ClpX chaperone family. As to quaternary structure, component of the ClpX-ClpP complex. Forms a hexameric ring that, in the presence of ATP, binds to fourteen ClpP subunits assembled into a disk-like structure with a central cavity, resembling the structure of eukaryotic proteasomes.

In terms of biological role, ATP-dependent specificity component of the Clp protease. It directs the protease to specific substrates. Can perform chaperone functions in the absence of ClpP. The protein is ATP-dependent Clp protease ATP-binding subunit ClpX of Dictyoglomus turgidum (strain DSM 6724 / Z-1310).